A 141-amino-acid polypeptide reads, in one-letter code: Large ribosomal subunit protein uL11 (141 aa).

It belongs to the universal ribosomal protein uL11 family. Part of the ribosomal stalk of the 50S ribosomal subunit. Interacts with L10 and the large rRNA to form the base of the stalk. L10 forms an elongated spine to which L12 dimers bind in a sequential fashion forming a multimeric L10(L12)X complex. One or more lysine residues are methylated.

In terms of biological role, forms part of the ribosomal stalk which helps the ribosome interact with GTP-bound translation factors. This Synechococcus sp. (strain RCC307) protein is Large ribosomal subunit protein uL11.